Consider the following 633-residue polypeptide: MTTPKKTAKTSGNEARELADLSEDIGIRFKYPNSERVYLQGSRDDIRVPLREIRQDDTYTAQGTEANPPIPVYDTSGVYGDPAAHIDLKQGLPHIRTAWLDERGDTEILPKLSSEYGIERAHDPKTAHLRFNQITRPRRAKAGRNVTQLHYARQGIITPEMEFVAIRERLKLDELSQKPEYAKLLKQHAGQSFGANIPTHPDQITPEFVRREIAAGRAIIPANINHPELEPMIIGRNFRVKINGNLGNSAVTSSLTEEVEKMVWSLRWGADTIMDLSTGAHIHETREWIIRNAPVPIGTVPIYQALEKTGGIAEDLTWDLFRDTLIEQAEQGVDYFTIHAGVLLRYVPMTANRLTGIVSRGGSIMAKWCLAHHRENFLYTHFDEICEIMKAYDVSFSLGDGLRPGCIADANDESQFAELHTLGELTSKAWKHDVQVMIEGPGHVPLQRVKENMTEELQHCFEAPFYTLGPLVTDIAPGYDHITSGIGAANIGWYGTAMLCYVTPKEHLGLPDKEDVRTGIITYKLAAHAADLAKGWPGAQLRDNALSKARFEFRWRDQFRLSLDPERAESFHDETLPAEGAKIAHFCSMCGPKFCSMKITQEVRDYADKQKAQRQGMEEKAVEFVKKGAKIYS.

Residues Asn245, Met274, Tyr303, His339, 359–361 (SRG), 400–403 (DGLR), and Glu439 each bind substrate. A Zn(2+)-binding site is contributed by His443. Tyr466 contributes to the substrate binding site. Position 507 (His507) interacts with Zn(2+). Residues Cys587, Cys590, and Cys595 each coordinate [4Fe-4S] cluster.

It belongs to the ThiC family. In terms of assembly, homodimer. The cofactor is [4Fe-4S] cluster.

The catalysed reaction is 5-amino-1-(5-phospho-beta-D-ribosyl)imidazole + S-adenosyl-L-methionine = 4-amino-2-methyl-5-(phosphooxymethyl)pyrimidine + CO + 5'-deoxyadenosine + formate + L-methionine + 3 H(+). The protein operates within cofactor biosynthesis; thiamine diphosphate biosynthesis. Catalyzes the synthesis of the hydroxymethylpyrimidine phosphate (HMP-P) moiety of thiamine from aminoimidazole ribotide (AIR) in a radical S-adenosyl-L-methionine (SAM)-dependent reaction. The polypeptide is Phosphomethylpyrimidine synthase (Neisseria meningitidis serogroup C (strain 053442)).